Reading from the N-terminus, the 794-residue chain is DNA ligase (794 aa).

NAD(+) contacts are provided by residues 35–39, 84–85, and Glu126; these read DAEYD and SL. Residue Lys128 is the N6-AMP-lysine intermediate of the active site. Positions 149, 186, 302, and 326 each coordinate NAD(+). 4 residues coordinate Zn(2+): Cys420, Cys423, Cys450, and Cys456. The BRCT domain maps to 711–794; the sequence is VEGLPLAGQT…KLFDEHGVAR (84 aa).

It belongs to the NAD-dependent DNA ligase family. LigA subfamily. Mg(2+) serves as cofactor. The cofactor is Mn(2+).

It carries out the reaction NAD(+) + (deoxyribonucleotide)n-3'-hydroxyl + 5'-phospho-(deoxyribonucleotide)m = (deoxyribonucleotide)n+m + AMP + beta-nicotinamide D-nucleotide.. Functionally, DNA ligase that catalyzes the formation of phosphodiester linkages between 5'-phosphoryl and 3'-hydroxyl groups in double-stranded DNA using NAD as a coenzyme and as the energy source for the reaction. It is essential for DNA replication and repair of damaged DNA. This chain is DNA ligase, found in Pseudomonas aeruginosa (strain LESB58).